Here is a 149-residue protein sequence, read N- to C-terminus: NADH-quinone oxidoreductase subunit A (149 aa).

A run of 3 helical transmembrane segments spans residues 16 to 36 (FAVF…GAFF), 68 to 88 (FYLV…LYAW), and 98 to 118 (LGFI…FYLV).

It belongs to the complex I subunit 3 family. In terms of assembly, NDH-1 is composed of 13 different subunits. Subunits NuoA, H, J, K, L, M, N constitute the membrane sector of the complex.

It localises to the cell inner membrane. It catalyses the reaction a quinone + NADH + 5 H(+)(in) = a quinol + NAD(+) + 4 H(+)(out). In terms of biological role, NDH-1 shuttles electrons from NADH, via FMN and iron-sulfur (Fe-S) centers, to quinones in the respiratory chain. The immediate electron acceptor for the enzyme in this species is believed to be ubiquinone. Couples the redox reaction to proton translocation (for every two electrons transferred, four hydrogen ions are translocated across the cytoplasmic membrane), and thus conserves the redox energy in a proton gradient. The chain is NADH-quinone oxidoreductase subunit A from Photorhabdus laumondii subsp. laumondii (strain DSM 15139 / CIP 105565 / TT01) (Photorhabdus luminescens subsp. laumondii).